Reading from the N-terminus, the 295-residue chain is Maintenance of mitochondrial morphology protein 1 (295 aa).

Residues 1–12 lie on the Lumenal side of the membrane; that stretch reads MVQLFHLTFTQG. Residues 13–33 traverse the membrane as a helical segment; sequence FFIGQLSVIVIVYIFLRFFLF. The Cytoplasmic portion of the chain corresponds to 34–295; that stretch reads CTKEELKNVQ…REGHRQKSTE (262 aa). The 198-residue stretch at 81–278 folds into the SMP-LTD domain; it reads EEESLDWFNV…SPQFQQISIP (198 aa).

The protein belongs to the MMM1 family. In terms of assembly, homodimer. Component of the ER-mitochondria encounter structure (ERMES) or MDM complex, composed of mmm1, mdm10, mdm12 and mdm34. A mmm1 homodimer associates with one molecule of mdm12 on each side in a pairwise head-to-tail manner, and the SMP-LTD domains of mmm1 and mdm12 generate a continuous hydrophobic tunnel for phospholipid trafficking.

It localises to the endoplasmic reticulum membrane. Functionally, component of the ERMES/MDM complex, which serves as a molecular tether to connect the endoplasmic reticulum (ER) and mitochondria. Components of this complex are involved in the control of mitochondrial shape and protein biogenesis, and function in nonvesicular lipid trafficking between the ER and mitochondria. The mdm12-mmm1 subcomplex functions in the major beta-barrel assembly pathway that is responsible for biogenesis of all outer membrane beta-barrel proteins, and acts in a late step after the SAM complex. The mdm10-mdm12-mmm1 subcomplex further acts in the TOM40-specific pathway after the action of the mdm12-mmm1 complex. Essential for establishing and maintaining the structure of mitochondria and maintenance of mtDNA nucleoids. This chain is Maintenance of mitochondrial morphology protein 1, found in Schizosaccharomyces japonicus (strain yFS275 / FY16936) (Fission yeast).